We begin with the raw amino-acid sequence, 452 residues long: Translation initiation factor eIF2B subunit gamma (452 aa).

An N-acetylmethionine modification is found at Met1. Position 260 is a phosphoserine (Ser260).

This sequence belongs to the eIF-2B gamma/epsilon subunits family. In terms of assembly, component of the translation initiation factor 2B (eIF2B) complex which is a heterodecamer of two sets of five different subunits: alpha, beta, gamma, delta and epsilon. Subunits alpha, beta and delta comprise a regulatory subcomplex and subunits epsilon and gamma comprise a catalytic subcomplex. Within the complex, the hexameric regulatory complex resides at the center, with the two heterodimeric catalytic subcomplexes bound on opposite sides.

It is found in the cytoplasm. It localises to the cytosol. With respect to regulation, activated by the chemical integrated stress response (ISR) inhibitor ISRIB which stimulates guanine nucleotide exchange factor activity for both phosphorylated and unphosphorylated eIF2. Acts as a component of the translation initiation factor 2B (eIF2B) complex, which catalyzes the exchange of GDP for GTP on the eukaryotic initiation factor 2 (eIF2) complex gamma subunit. Its guanine nucleotide exchange factor activity is repressed when bound to eIF2 complex phosphorylated on the alpha subunit, thereby limiting the amount of methionyl-initiator methionine tRNA available to the ribosome and consequently global translation is repressed. This is Translation initiation factor eIF2B subunit gamma (EIF2B3) from Macaca fascicularis (Crab-eating macaque).